A 200-amino-acid chain; its full sequence is Glycerol-3-phosphate acyltransferase (200 aa).

A run of 5 helical transmembrane segments spans residues 6–26, 56–76, 82–102, 118–138, and 141–161; these read LTLGMILAAYLAGSISSAVLV, SAAMVLFFDMLKGALPAYIAF, QVALGAIAIAACLGHIFPIFF, APIGHELALALMVTWIVMVLI, and YSSLAAITTAMLAPIYTWFLD.

The protein belongs to the PlsY family. As to quaternary structure, probably interacts with PlsX.

It is found in the cell inner membrane. It carries out the reaction an acyl phosphate + sn-glycerol 3-phosphate = a 1-acyl-sn-glycero-3-phosphate + phosphate. It functions in the pathway lipid metabolism; phospholipid metabolism. Its function is as follows. Catalyzes the transfer of an acyl group from acyl-phosphate (acyl-PO(4)) to glycerol-3-phosphate (G3P) to form lysophosphatidic acid (LPA). This enzyme utilizes acyl-phosphate as fatty acyl donor, but not acyl-CoA or acyl-ACP. In Shewanella sediminis (strain HAW-EB3), this protein is Glycerol-3-phosphate acyltransferase.